Here is a 422-residue protein sequence, read N- to C-terminus: MSEAEKQAVSFACQRCLQPIVLDEQLEKISVHAMAELSLPIYGDNGNTLDPQDASSFDHFVPPYRLTDSINGTGFMLVSDGRDNKKMSAAFKLKAELFDCLSSNSEIDHPLCEECADSMLEIMDRELRIAEDEWDVYKAYLDELEQQRVAPNVEALDKELDELKRSEQQLLSELKELKKEEQSLNDAIAEEEQEREELHEQEESYWREYTKHRRELMLTEDDKRSLECQIAYSKQQLDKLRDTNIFNITFHIWHAGHFGTINNFRLGRLPSVSVDWSEINAAWGQTVLLLSALARKIGLTFERYRVVPFGNHSYVEVLGENRELPLYGSGGFKFFWDTKFDAAMVAFLDCLTQFQKEVEKRDTEFLLPYKMEKGKIIDPSTGNSYSIKIQFNSEEQWTKALKFMLTNLKWGLAWVSSQFVSP.

Residues 119–243 (MLEIMDRELR…KQQLDKLRDT (125 aa)) are a coiled coil. A disordered region spans residues 182–201 (QSLNDAIAEEEQEREELHEQ).

It belongs to the beclin family. Interacts with Rab18, preferentially binding to the GTP-bound form.

Its function is as follows. Plays a central role in autophagy. The chain is Beclin-1-like protein from Drosophila melanogaster (Fruit fly).